The following is a 63-amino-acid chain: ARDGYPVDEKGCKLSCLINDKWCNSACHSRGGKYGYCYTGGLACYCEAVPDNVKVWTYETNTC.

The 62-residue stretch at 2 to 63 (RDGYPVDEKG…KVWTYETNTC (62 aa)) folds into the LCN-type CS-alpha/beta domain. 4 disulfide bridges follow: Cys-12–Cys-63, Cys-16–Cys-37, Cys-23–Cys-44, and Cys-27–Cys-46.

This sequence belongs to the long (4 C-C) scorpion toxin superfamily. Sodium channel inhibitor family. As to expression, expressed by the venom gland.

Its subcellular location is the secreted. Functionally, first blocker of sodium channels (Nav) found in scorpions. Is lethal to crustaceans (Cambarellus montezumae), less toxic to insects (crickets) and non-toxic to mammals (mice) at the doses assayed. The polypeptide is Toxin Cn11 (Centruroides noxius (Mexican scorpion)).